A 556-amino-acid polypeptide reads, in one-letter code: uncharacterized protein (556 aa).

A helical transmembrane segment spans residues 16–36; the sequence is LFWTIGVLGAGALTTFSAVMI.

The protein resides in the membrane. This is an uncharacterized protein from Mycoplasma genitalium (strain ATCC 33530 / DSM 19775 / NCTC 10195 / G37) (Mycoplasmoides genitalium).